A 338-amino-acid chain; its full sequence is Elongation factor Ts, mitochondrial (338 aa).

Residues 1–42 (MSPSIAMFTLTPNARALASKTSKMDLIKNLRERTGAPIVDVK) constitute a mitochondrion transit peptide.

Belongs to the EF-Ts family.

Its subcellular location is the mitochondrion. In terms of biological role, associates with the EF-Tu.GDP complex and induces the exchange of GDP to GTP. It remains bound to the aminoacyl-tRNA.EF-Tu.GTP complex up to the GTP hydrolysis stage on the ribosome. In Ostreococcus tauri, this protein is Elongation factor Ts, mitochondrial.